Reading from the N-terminus, the 373-residue chain is Probable quinol oxidase subunit 2 (373 aa).

Residues 1-19 (MSKFKSLLLLFGSLILLSG) form the signal peptide. A lipid anchor (N-palmitoyl cysteine) is attached at Cys-20. A lipid anchor (S-diacylglycerol cysteine) is attached at Cys-20. 2 consecutive transmembrane segments (helical) span residues 38 to 58 (FLIM…LILF) and 82 to 102 (LETI…IPTV). Composition is skewed to basic and acidic residues over residues 292-320 (EERT…ERHG) and 339-373 (EESH…GGGH). The segment at 292–373 (EERTADVLDK…KKDHENGGGH (82 aa)) is disordered.

Belongs to the cytochrome c oxidase subunit 2 family.

The protein resides in the cell membrane. The enzyme catalyses 2 a quinol + O2 = 2 a quinone + 2 H2O. In terms of biological role, catalyzes quinol oxidation with the concomitant reduction of oxygen to water. Subunit II transfers the electrons from a quinol to the binuclear center of the catalytic subunit I. The polypeptide is Probable quinol oxidase subunit 2 (qoxA) (Staphylococcus saprophyticus subsp. saprophyticus (strain ATCC 15305 / DSM 20229 / NCIMB 8711 / NCTC 7292 / S-41)).